Here is a 385-residue protein sequence, read N- to C-terminus: Heat-inducible transcription repressor HrcA (385 aa).

The protein belongs to the HrcA family.

In terms of biological role, negative regulator of class I heat shock genes (grpE-dnaK-dnaJ and groELS operons). Prevents heat-shock induction of these operons. The chain is Heat-inducible transcription repressor HrcA from Protochlamydia amoebophila (strain UWE25).